We begin with the raw amino-acid sequence, 447 residues long: Methylenetetrahydrofolate--tRNA-(uracil-5-)-methyltransferase TrmFO (447 aa).

FAD is bound at residue 13–18; that stretch reads GAGLAG.

It belongs to the MnmG family. TrmFO subfamily. FAD serves as cofactor.

Its subcellular location is the cytoplasm. The catalysed reaction is uridine(54) in tRNA + (6R)-5,10-methylene-5,6,7,8-tetrahydrofolate + NADH + H(+) = 5-methyluridine(54) in tRNA + (6S)-5,6,7,8-tetrahydrofolate + NAD(+). It carries out the reaction uridine(54) in tRNA + (6R)-5,10-methylene-5,6,7,8-tetrahydrofolate + NADPH + H(+) = 5-methyluridine(54) in tRNA + (6S)-5,6,7,8-tetrahydrofolate + NADP(+). Functionally, catalyzes the folate-dependent formation of 5-methyl-uridine at position 54 (M-5-U54) in all tRNAs. In Streptococcus thermophilus (strain CNRZ 1066), this protein is Methylenetetrahydrofolate--tRNA-(uracil-5-)-methyltransferase TrmFO.